The following is a 163-amino-acid chain: Nucleotide-binding protein APL_1231 (163 aa).

Belongs to the YajQ family.

In terms of biological role, nucleotide-binding protein. This chain is Nucleotide-binding protein APL_1231, found in Actinobacillus pleuropneumoniae serotype 5b (strain L20).